Here is a 172-residue protein sequence, read N- to C-terminus: Ribosome maturation factor RimM (172 aa).

A PRC barrel domain is found at 96–168 (DGEFYYHEII…RVDVEIPEGL (73 aa)).

The protein belongs to the RimM family. In terms of assembly, binds ribosomal protein uS19.

Its subcellular location is the cytoplasm. An accessory protein needed during the final step in the assembly of 30S ribosomal subunit, possibly for assembly of the head region. Essential for efficient processing of 16S rRNA. May be needed both before and after RbfA during the maturation of 16S rRNA. It has affinity for free ribosomal 30S subunits but not for 70S ribosomes. This Streptococcus sanguinis (strain SK36) protein is Ribosome maturation factor RimM.